The chain runs to 406 residues: Phosphoglycerate kinase (406 aa).

Substrate contacts are provided by residues 23–25 (DIN), Arg38, 61–64 (HQGR), Arg117, and Arg157. Residues Glu331 and 357-360 (GGHI) each bind ATP.

It belongs to the phosphoglycerate kinase family. In terms of assembly, monomer.

It is found in the cytoplasm. It carries out the reaction (2R)-3-phosphoglycerate + ATP = (2R)-3-phospho-glyceroyl phosphate + ADP. It functions in the pathway carbohydrate degradation; glycolysis; pyruvate from D-glyceraldehyde 3-phosphate: step 2/5. This Methanopyrus kandleri (strain AV19 / DSM 6324 / JCM 9639 / NBRC 100938) protein is Phosphoglycerate kinase.